Consider the following 109-residue polypeptide: Anti-sigma-B factor antagonist (109 aa).

An STAS domain is found at 3–109; sequence INVDVKQNEN…ISAKSEGGVQ (107 aa). A phosphoserine mark is found at Ser-52 and Ser-56. Thr-57 is modified (phosphothreonine).

It belongs to the anti-sigma-factor antagonist family. As to quaternary structure, monomer. In stressed cells, forms a complex with RsbW. The predominant form of this complex has a stoichiometry of 2:2 (one dimer of RsbW is bound by two monomers of RsbV). Binds to RsbW in the presence of low levels of ATP or under conditions of energy or environmental stress (through dephosphorylation by RsbP or RsbU). Post-translationally, phosphorylated by RsbW on a serine residue. Dephosphorylated by RsbP or RsbU.

Its function is as follows. Positive regulator of sigma-B activity. Non-phosphorylated RsbV binds to RsbW, preventing its association with sigma-B. When phosphorylated, releases RsbW, which is then free to complex with and inactivate sigma-B. This is Anti-sigma-B factor antagonist (rsbV) from Bacillus subtilis (strain 168).